A 129-amino-acid polypeptide reads, in one-letter code: MSVPAELKYTESHEWVRLEADGSVTVGITQHAQELLGDMVFVQLPDVGRALAQREDCAVVESVKAASDIYAPLGGEVIAVNSEVETSPEKINEDCYAAWLFKLKPANAGEVDGLLDAGGYQKLLDSEAH.

The Lipoyl-binding domain maps to 23 to 104 (SVTVGITQHA…CYAAWLFKLK (82 aa)). Lys-64 carries the N6-lipoyllysine modification.

It belongs to the GcvH family. The glycine cleavage system is composed of four proteins: P, T, L and H. (R)-lipoate is required as a cofactor.

The glycine cleavage system catalyzes the degradation of glycine. The H protein shuttles the methylamine group of glycine from the P protein to the T protein. This chain is Glycine cleavage system H protein, found in Nitrosomonas europaea (strain ATCC 19718 / CIP 103999 / KCTC 2705 / NBRC 14298).